The chain runs to 359 residues: Protein-glutamate methylesterase/protein-glutamine glutaminase 2 (359 aa).

The region spanning Lys6–Asp123 is the Response regulatory domain. Asp57 carries the 4-aspartylphosphate modification. A CheB-type methylesterase domain is found at Glu167–Cys359. Residues Ser179, His205, and Asp301 contribute to the active site.

This sequence belongs to the CheB family. Post-translationally, phosphorylated by CheA. Phosphorylation of the N-terminal regulatory domain activates the methylesterase activity.

The protein localises to the cytoplasm. The enzyme catalyses [protein]-L-glutamate 5-O-methyl ester + H2O = L-glutamyl-[protein] + methanol + H(+). It catalyses the reaction L-glutaminyl-[protein] + H2O = L-glutamyl-[protein] + NH4(+). In terms of biological role, involved in chemotaxis. Part of a chemotaxis signal transduction system that modulates chemotaxis in response to various stimuli. Catalyzes the demethylation of specific methylglutamate residues introduced into the chemoreceptors (methyl-accepting chemotaxis proteins or MCP) by CheR. Also mediates the irreversible deamidation of specific glutamine residues to glutamic acid. This chain is Protein-glutamate methylesterase/protein-glutamine glutaminase 2, found in Dechloromonas aromatica (strain RCB).